We begin with the raw amino-acid sequence, 473 residues long: Cysteine--tRNA ligase (473 aa).

Position 28 (C28) interacts with Zn(2+). The 'HIGH' region signature appears at 30-40; that stretch reads PTVYNMPHIGN. Zn(2+) is bound by residues C213, H238, and E242. A 'KMSKS' region motif is present at residues 270–274; the sequence is KMSKS. K273 contacts ATP.

This sequence belongs to the class-I aminoacyl-tRNA synthetase family. Zn(2+) is required as a cofactor.

It localises to the cytoplasm. The enzyme catalyses tRNA(Cys) + L-cysteine + ATP = L-cysteinyl-tRNA(Cys) + AMP + diphosphate. The chain is Cysteine--tRNA ligase from Methanosarcina mazei (strain ATCC BAA-159 / DSM 3647 / Goe1 / Go1 / JCM 11833 / OCM 88) (Methanosarcina frisia).